Reading from the N-terminus, the 332-residue chain is Ribose-phosphate pyrophosphokinase (332 aa).

Residue 57-59 (DGE) coordinates ATP. Mg(2+)-binding residues include histidine 150 and aspartate 189. The active site involves lysine 213. D-ribose 5-phosphate is bound by residues arginine 215, aspartate 239, and 243–247 (DTAGT).

The protein belongs to the ribose-phosphate pyrophosphokinase family. Class I subfamily. In terms of assembly, homohexamer. Mg(2+) serves as cofactor.

It localises to the cytoplasm. It carries out the reaction D-ribose 5-phosphate + ATP = 5-phospho-alpha-D-ribose 1-diphosphate + AMP + H(+). It functions in the pathway metabolic intermediate biosynthesis; 5-phospho-alpha-D-ribose 1-diphosphate biosynthesis; 5-phospho-alpha-D-ribose 1-diphosphate from D-ribose 5-phosphate (route I): step 1/1. Involved in the biosynthesis of the central metabolite phospho-alpha-D-ribosyl-1-pyrophosphate (PRPP) via the transfer of pyrophosphoryl group from ATP to 1-hydroxyl of ribose-5-phosphate (Rib-5-P). This is Ribose-phosphate pyrophosphokinase from Gloeobacter violaceus (strain ATCC 29082 / PCC 7421).